Reading from the N-terminus, the 275-residue chain is Phosphonoacetaldehyde hydrolase (275 aa).

D15 (nucleophile) is an active-site residue. D15 and A17 together coordinate Mg(2+). Residue K56 is the Schiff-base intermediate with substrate of the active site. Mg(2+) is bound at residue D189.

The protein belongs to the HAD-like hydrolase superfamily. PhnX family. In terms of assembly, homodimer. Requires Mg(2+) as cofactor.

The enzyme catalyses phosphonoacetaldehyde + H2O = acetaldehyde + phosphate + H(+). Its function is as follows. Involved in phosphonate degradation. In Pseudomonas paraeruginosa (strain DSM 24068 / PA7) (Pseudomonas aeruginosa (strain PA7)), this protein is Phosphonoacetaldehyde hydrolase.